A 304-amino-acid chain; its full sequence is Acetaldehyde dehydrogenase 4 (304 aa).

Catalysis depends on Cys-131, which acts as the Acyl-thioester intermediate. Residues 162–170 and Asn-273 contribute to the NAD(+) site; that span reads SAGPGTRKN.

Belongs to the acetaldehyde dehydrogenase family. As to quaternary structure, heterotetramer composed of two BphI (aldolase) and two BphJ (dehydrogenase).

The catalysed reaction is acetaldehyde + NAD(+) + CoA = acetyl-CoA + NADH + H(+). The enzyme catalyses propanal + NAD(+) + CoA = propanoyl-CoA + NADH + H(+). It participates in xenobiotic degradation; polychlorinated biphenyl degradation. With respect to regulation, bound pyruvate or other intermediates in the aldol addition reaction catalyzed by BphI allosterically activates BphJ reductive deacylation activity. Catalyzes the conversion of acetaldehyde or propanal to acetyl-CoA or propanoyl-CoA, respectively, using NAD(+) and coenzyme A. Displays broad specificity since it can utilize aliphatic aldehydes from two to five carbons in length as substrates; the aldehyde substrates can be directly channeled from the aldolase BphI to the dehydrogenase BphJ. Is the final enzyme in the meta-cleavage pathway for the degradation of polychlorinated biphenyls (PCBs). Is also able to utilize NADP(+) instead of NAD(+). Is not active with succinic semialdehyde or picolinaldehyde as substrates. Can also catalyze the reverse reaction, i.e. the reductive deacylation of acetyl-CoA to acetaldehyde, which is then channeled to the BphI active site. The BphI-BphJ enzyme complex exhibits unique bidirectionality in substrate channeling and allosteric activation. The protein is Acetaldehyde dehydrogenase 4 (bphJ) of Paraburkholderia xenovorans (strain LB400).